Reading from the N-terminus, the 432-residue chain is 3-phosphoshikimate 1-carboxyvinyltransferase (432 aa).

3-phosphoshikimate contacts are provided by Lys22, Ser23, and Arg27. Lys22 provides a ligand contact to phosphoenolpyruvate. Phosphoenolpyruvate contacts are provided by Gly96 and Arg127. 7 residues coordinate 3-phosphoshikimate: Ser173, Ser174, Gln175, Ser201, Asp316, Asn339, and Lys343. Gln175 contacts phosphoenolpyruvate. Asp316 (proton acceptor) is an active-site residue. Residues Arg347, Arg391, and Lys416 each coordinate phosphoenolpyruvate.

This sequence belongs to the EPSP synthase family. In terms of assembly, monomer.

It is found in the cytoplasm. It catalyses the reaction 3-phosphoshikimate + phosphoenolpyruvate = 5-O-(1-carboxyvinyl)-3-phosphoshikimate + phosphate. It functions in the pathway metabolic intermediate biosynthesis; chorismate biosynthesis; chorismate from D-erythrose 4-phosphate and phosphoenolpyruvate: step 6/7. Catalyzes the transfer of the enolpyruvyl moiety of phosphoenolpyruvate (PEP) to the 5-hydroxyl of shikimate-3-phosphate (S3P) to produce enolpyruvyl shikimate-3-phosphate and inorganic phosphate. This chain is 3-phosphoshikimate 1-carboxyvinyltransferase, found in Haemophilus influenzae (strain PittGG).